The sequence spans 64 residues: Large ribosomal subunit protein bL35 (64 aa).

Residues 1–14 are compositionally biased toward basic residues; the sequence is MKQKTHKGAAKRIK. The tract at residues 1–50 is disordered; it reads MKQKTHKGAAKRIKISGSGKLRREQANRRHLLEGKPSKRTRRLKGTEDVA. The span at 21-36 shows a compositional bias: basic and acidic residues; the sequence is LRREQANRRHLLEGKP.

This sequence belongs to the bacterial ribosomal protein bL35 family.

The chain is Large ribosomal subunit protein bL35 from Corynebacterium jeikeium (strain K411).